A 636-amino-acid chain; its full sequence is NADP-dependent malic enzyme, chloroplastic (636 aa).

A disordered region spans residues 1 to 28; sequence MLSTRTAAVAASASPASPWKLGGRSEGG. The N-terminal 62 residues, 1–62, are a transit peptide targeting the chloroplast; the sequence is MLSTRTAAVA…LPPRRVDAVA (62 aa). The span at 7 to 18 shows a compositional bias: low complexity; the sequence is AAVAASASPASP. Residue Tyr-184 is the Proton donor of the active site. Residue Arg-237 coordinates NAD(+). Catalysis depends on Lys-255, which acts as the Proton acceptor. A divalent metal cation-binding residues include Glu-327, Asp-328, and Asp-351. Position 351 (Asp-351) interacts with NAD(+). 380–396 contacts NADP(+); it reads LFLGAGEAGTGIAELIA. Asn-492 lines the NAD(+) pocket.

The protein belongs to the malic enzymes family. Homotetramer. It depends on Mg(2+) as a cofactor. Mn(2+) serves as cofactor.

The protein localises to the plastid. Its subcellular location is the chloroplast. The catalysed reaction is (S)-malate + NADP(+) = pyruvate + CO2 + NADPH. The enzyme catalyses oxaloacetate + H(+) = pyruvate + CO2. Its pathway is photosynthesis; C4 acid pathway. Its function is as follows. The chloroplastic ME isoform decarboxylates malate shuttled from neighboring mesophyll cells. The CO(2) released is then refixed by ribulose-bisphosphate carboxylase. This pathway eliminates the photorespiratory loss of CO(2) that occurs in most plants. The polypeptide is NADP-dependent malic enzyme, chloroplastic (MOD1) (Zea mays (Maize)).